The sequence spans 291 residues: Quinol oxidase subunit 2 (291 aa).

Residues M1–K28 form the signal peptide. 2 consecutive transmembrane segments (helical) span residues S49 to I69 and L91 to V111.

Belongs to the cytochrome c oxidase subunit 2 family.

The protein resides in the cell membrane. It catalyses the reaction 2 a quinol + O2 = 2 a quinone + 2 H2O. In terms of biological role, catalyzes quinol oxidation with the concomitant reduction of oxygen to water. Subunit II transfers the electrons from a quinol to the binuclear center of the catalytic subunit I. This Bacillus cereus (strain ATCC 14579 / DSM 31 / CCUG 7414 / JCM 2152 / NBRC 15305 / NCIMB 9373 / NCTC 2599 / NRRL B-3711) protein is Quinol oxidase subunit 2.